Consider the following 87-residue polypeptide: Small ribosomal subunit protein bS18 (87 aa).

It belongs to the bacterial ribosomal protein bS18 family. In terms of assembly, part of the 30S ribosomal subunit. Forms a tight heterodimer with protein bS6.

Its function is as follows. Binds as a heterodimer with protein bS6 to the central domain of the 16S rRNA, where it helps stabilize the platform of the 30S subunit. This Campylobacter hominis (strain ATCC BAA-381 / DSM 21671 / CCUG 45161 / LMG 19568 / NCTC 13146 / CH001A) protein is Small ribosomal subunit protein bS18.